We begin with the raw amino-acid sequence, 430 residues long: Acylsugar acyltransferase 3 (430 aa).

Catalysis depends on proton acceptor residues histidine 155 and aspartate 367.

It belongs to the plant acyltransferase family. Monomer. Expressed in tip cells of type I trichomes of stems and petioles, sites of acylsugars production.

In terms of biological role, catalyzes the transfer of short (four to five carbons) branched acyl chains to the furanose ring of di-acylsucrose acceptors to produce tri-acylsucroses such as S3:15 (5,5,5), S4:17 (2,5,5,5) and S4:24 (2,5,5,12) acylsucroses. The protein is Acylsugar acyltransferase 3 of Solanum lycopersicum (Tomato).